Here is a 288-residue protein sequence, read N- to C-terminus: POU domain class 2-associating factor 2 (288 aa).

The OCA domain occupies 10-32; it reads KRVYQGVRVKHTVKDLLAEKRSG. 2 disordered regions span residues 24–52 and 247–274; these read DLLA…PFVQ and PPKV…VKED. Residues 35 to 48 are compositionally biased toward low complexity; sequence SNSRLNGSVSSSQS.

The protein belongs to the POU2AF family. As to quaternary structure, interacts with POU2F3 (via the POU domain) in a DNA-dependent manner; this interaction recruits POU2AF2 to chromatin and increases POU2F3 transactivation activity. As to expression, expressed in tuft cells of colon mucosa, as well as in small intestine and thymus.

The protein localises to the cytoplasm. It localises to the cytosol. Its subcellular location is the nucleus. Its function is as follows. Transcriptional coactivator of POU2F3. This complex drives the development of tuft cells, a rare chemosensory cells that coordinate immune and neural functions within mucosal epithelial tissues. This is POU domain class 2-associating factor 2 from Homo sapiens (Human).